The primary structure comprises 312 residues: Deoxyribonuclease-1-like 1 (312 aa).

Residues 1–35 (MPSGQPVFPRRVPDAYIAMRGLVVASLLILLVGGT) form the signal peptide. Residue Asn102 is glycosylated (N-linked (GlcNAc...) asparagine). Glu113 is a catalytic residue. Asn133 carries an N-linked (GlcNAc...) asparagine glycan. Residue His164 is part of the active site. A disulfide bridge connects residues Cys203 and Cys240. Asn239 carries N-linked (GlcNAc...) asparagine glycosylation.

It belongs to the DNase I family.

The protein resides in the endoplasmic reticulum. The protein is Deoxyribonuclease-1-like 1 (Dnase1l1) of Rattus norvegicus (Rat).